A 325-amino-acid polypeptide reads, in one-letter code: tRNA(Ile)-lysidine synthase (325 aa).

34–39 (SGGADS) contributes to the ATP binding site.

It belongs to the tRNA(Ile)-lysidine synthase family.

It localises to the cytoplasm. It catalyses the reaction cytidine(34) in tRNA(Ile2) + L-lysine + ATP = lysidine(34) in tRNA(Ile2) + AMP + diphosphate + H(+). Functionally, ligates lysine onto the cytidine present at position 34 of the AUA codon-specific tRNA(Ile) that contains the anticodon CAU, in an ATP-dependent manner. Cytidine is converted to lysidine, thus changing the amino acid specificity of the tRNA from methionine to isoleucine. The chain is tRNA(Ile)-lysidine synthase from Rhodococcus erythropolis (strain PR4 / NBRC 100887).